The sequence spans 552 residues: Probable protein kinase UbiB (552 aa).

The 384-residue stretch at 121 to 504 (HFDTVPLASA…QGLQRRVVNA (384 aa)) folds into the Protein kinase domain. ATP is bound by residues 127–135 (LASASISQV) and Lys-149. Asp-284 serves as the catalytic Proton acceptor. Helical transmembrane passes span 501 to 521 (VVNA…YGLH) and 526 to 546 (YLGA…LALF).

The protein belongs to the ABC1 family. UbiB subfamily.

The protein resides in the cell inner membrane. Its pathway is cofactor biosynthesis; ubiquinone biosynthesis [regulation]. Functionally, is probably a protein kinase regulator of UbiI activity which is involved in aerobic coenzyme Q (ubiquinone) biosynthesis. This chain is Probable protein kinase UbiB, found in Xylella fastidiosa (strain 9a5c).